The following is a 702-amino-acid chain: Lipase maturation factor 2 (702 aa).

Helical transmembrane passes span 10 to 30 (LFLQ…YTQI), 75 to 95 (AQGL…ALLL), 102 to 122 (FIYL…QVFL), 123 to 143 (YFQW…VAPL), 164 to 184 (DLPF…SGVV), 226 to 246 (LSVV…FAPI), 259 to 279 (LLQI…LTLV), 316 to 336 (LMLE…YFGL), 363 to 383 (VTLP…LIAL), and 396 to 416 (FFAG…FLIS). N-linked (GlcNAc...) asparagine glycosylation occurs at Asn488. Residues 628-648 (QLSPLEPSILLWGLLGAVVAI) traverse the membrane as a helical segment. The disordered stretch occupies residues 660–702 (LQSSKQTREEKRKQAPKKDSRAVSEQTAPNSNSNGSWAPRRKK). Over residues 665-681 (QTREEKRKQAPKKDSRA) the composition is skewed to basic and acidic residues. The span at 682-695 (VSEQTAPNSNSNGS) shows a compositional bias: polar residues.

Belongs to the lipase maturation factor family.

The protein localises to the endoplasmic reticulum membrane. In terms of biological role, involved in the maturation of specific proteins in the endoplasmic reticulum. May be required for maturation and transport of active lipoprotein lipase (LPL) through the secretory pathway. This Rattus norvegicus (Rat) protein is Lipase maturation factor 2 (Lmf2).